The following is a 456-amino-acid chain: Sulfate adenylyltransferase (456 aa).

It belongs to the sulfate adenylyltransferase family.

The catalysed reaction is sulfate + ATP + H(+) = adenosine 5'-phosphosulfate + diphosphate. It participates in sulfur metabolism; hydrogen sulfide biosynthesis; sulfite from sulfate: step 1/3. In Archaeoglobus fulgidus (strain ATCC 49558 / DSM 4304 / JCM 9628 / NBRC 100126 / VC-16), this protein is Sulfate adenylyltransferase (sat).